The sequence spans 436 residues: Aminotransferase tdiD (436 aa).

Substrate-binding residues include Arg30, Tyr86, Tyr148, and Asn202. Lys270 carries the N6-(pyridoxal phosphate)lysine modification. Arg407 contacts substrate.

Belongs to the class-I pyridoxal-phosphate-dependent aminotransferase family. Requires pyridoxal 5'-phosphate as cofactor.

The enzyme catalyses 3-phenylpyruvate + L-tryptophan = indole-3-pyruvate + L-phenylalanine. It participates in secondary metabolite biosynthesis. Its function is as follows. Aminotransferase; part of the gene cluster that mediates the biosynthesis of terrequinone A, an antitumor agent. The first step in the biosynthetic pathway for terrequinone A is formation of indole pyruvic acid (IPA) from L-tryptophan by the aminotransferase tdiD. The nonribosomal peptide synthase tdiA then immediately converts unstable IPA to didemethylasterriquinone D (DDAQ D), via condensation of 2 IPA molecules. The symmetric connectivity of the 2 IPA molecules is thought to arise by head-to-tail dual Claisen condensations facilitated by the TE domain. TdiB then catalyzes reverse prenylation by transferring dimethylallyl diphosphate to carbon atom 2' of DDAQ D, to yield asterriquinone C-1. Finally, tdiC and tdiE enzymes robustly convert asterriquinone C-1 to terrequinone A via a transformation involving regular prenylation at carbon atom 5, which requires elimination of the hydroxy group on C-5. The chain is Aminotransferase tdiD from Emericella nidulans (strain FGSC A4 / ATCC 38163 / CBS 112.46 / NRRL 194 / M139) (Aspergillus nidulans).